The sequence spans 208 residues: Peptidyl-tRNA hydrolase (208 aa).

Tyrosine 19 is a binding site for tRNA. The Proton acceptor role is filled by histidine 24. TRNA is bound by residues phenylalanine 71, asparagine 73, and asparagine 119.

This sequence belongs to the PTH family. In terms of assembly, monomer.

Its subcellular location is the cytoplasm. The catalysed reaction is an N-acyl-L-alpha-aminoacyl-tRNA + H2O = an N-acyl-L-amino acid + a tRNA + H(+). Hydrolyzes ribosome-free peptidyl-tRNAs (with 1 or more amino acids incorporated), which drop off the ribosome during protein synthesis, or as a result of ribosome stalling. Functionally, catalyzes the release of premature peptidyl moieties from peptidyl-tRNA molecules trapped in stalled 50S ribosomal subunits, and thus maintains levels of free tRNAs and 50S ribosomes. The chain is Peptidyl-tRNA hydrolase from Synechococcus elongatus (strain ATCC 33912 / PCC 7942 / FACHB-805) (Anacystis nidulans R2).